The chain runs to 79 residues: MMKNQFQLSLIILTFFILLELGVMGNVQQVKREQCHTVIPNKSGKCIFTECKSACEKLKKPVASLCLPPKTCRCYHFCS.

The signal sequence occupies residues 1-25; that stretch reads MMKNQFQLSLIILTFFILLELGVMG. Cystine bridges form between C35–C78, C46–C66, C51–C72, and C55–C74.

The protein belongs to the DEFL family.

Its subcellular location is the secreted. This chain is Putative defensin-like protein 146 (LCR9), found in Arabidopsis thaliana (Mouse-ear cress).